We begin with the raw amino-acid sequence, 148 residues long: Small ribosomal subunit protein uS13 (148 aa).

This sequence belongs to the universal ribosomal protein uS13 family. Part of the 30S ribosomal subunit. Forms a loose heterodimer with protein S19. Forms two bridges to the 50S subunit in the 70S ribosome.

Located at the top of the head of the 30S subunit, it contacts several helices of the 16S rRNA. In the 70S ribosome it contacts the 23S rRNA (bridge B1a) and protein L5 of the 50S subunit (bridge B1b), connecting the 2 subunits; these bridges are implicated in subunit movement. The protein is Small ribosomal subunit protein uS13 of Pyrococcus abyssi (strain GE5 / Orsay).